The following is a 302-amino-acid chain: Nucleotide-binding protein Bcep18194_A6125 (302 aa).

8-15 (GISGSGKS) contacts ATP. 57 to 60 (DARS) lines the GTP pocket.

It belongs to the RapZ-like family.

In terms of biological role, displays ATPase and GTPase activities. The chain is Nucleotide-binding protein Bcep18194_A6125 from Burkholderia lata (strain ATCC 17760 / DSM 23089 / LMG 22485 / NCIMB 9086 / R18194 / 383).